A 543-amino-acid chain; its full sequence is MSMFCFQCQETAKGTGCILSGVCGKTPEVANMQDLLLFVVRGIAVYNQALRKDGRSSARADKFIFDALFTTITNANFDKHAIIKKIKKGLELKKDLSNQVTIEHAPDECTWYGDETEFEEKAQTVGVLRTSDEDIRSLKELVHYGIKGMAAYVEHAYNLGYENPEIFAFMQYALAELTREDITVDELITLTLATGNHGVQAMAQLDTANTSHYGNPEISEVNIGVRNNPGILVSGHDLKDIEELLQQTEGTGIDIYTHSEMLPAHYYPQLKKYKHLVGNYGNAWWKQKEEFESFNGPILFTTNCIVPPRPNATYKDRIYTTGATGLEGATYIPERKDGKQKDFSVIIEHARRCQPPVAIESGKIVGGFAHAQVIALADKVVEAVKSGAIRKFFVMAGCDGRMKSRSYYTEFAEKLPADTVILTAGCAKYRYNKLPLGDINGIPRVLDAGQCNDSYSLAIIAMKLQEVFGLKDINDLPIVYNIAWYEQKAVIVLLALLALGVKKIHLGPTLPAFLSPNVKQVLIDNFGIGGISTADEDIAKFLA.

[4Fe-4S] cluster contacts are provided by C5, C8, C17, and C23. Hybrid [4Fe-2O-2S] cluster is bound by residues H236, E260, C304, C398, C426, C451, E486, and K488. A Cysteine persulfide modification is found at C398.

It belongs to the HCP family. Requires [4Fe-4S] cluster as cofactor. It depends on hybrid [4Fe-2O-2S] cluster as a cofactor.

The protein resides in the cytoplasm. The enzyme catalyses A + NH4(+) + H2O = hydroxylamine + AH2 + H(+). Its function is as follows. Catalyzes the reduction of hydroxylamine to form NH(3) and H(2)O. This is Hydroxylamine reductase from Bacteroides fragilis (strain ATCC 25285 / DSM 2151 / CCUG 4856 / JCM 11019 / LMG 10263 / NCTC 9343 / Onslow / VPI 2553 / EN-2).